The primary structure comprises 184 residues: ATP synthase subunit b, chloroplastic (184 aa).

A helical transmembrane segment spans residues 27-49; that stretch reads LATNLINLSVVIGVLIFFGKGVL.

This sequence belongs to the ATPase B chain family. F-type ATPases have 2 components, F(1) - the catalytic core - and F(0) - the membrane proton channel. F(1) has five subunits: alpha(3), beta(3), gamma(1), delta(1), epsilon(1). F(0) has four main subunits: a(1), b(1), b'(1) and c(10-14). The alpha and beta chains form an alternating ring which encloses part of the gamma chain. F(1) is attached to F(0) by a central stalk formed by the gamma and epsilon chains, while a peripheral stalk is formed by the delta, b and b' chains.

It is found in the plastid. The protein localises to the chloroplast thylakoid membrane. Functionally, f(1)F(0) ATP synthase produces ATP from ADP in the presence of a proton or sodium gradient. F-type ATPases consist of two structural domains, F(1) containing the extramembraneous catalytic core and F(0) containing the membrane proton channel, linked together by a central stalk and a peripheral stalk. During catalysis, ATP synthesis in the catalytic domain of F(1) is coupled via a rotary mechanism of the central stalk subunits to proton translocation. In terms of biological role, component of the F(0) channel, it forms part of the peripheral stalk, linking F(1) to F(0). This is ATP synthase subunit b, chloroplastic from Jasminum nudiflorum (Winter jasmine).